We begin with the raw amino-acid sequence, 84 residues long: MLGIHVKKTKEELIISWQLAKITIPLRDVIEVTEDATYAGVEDTSAIRIGTAYGTTDRILIKTVKQNYVLFTTNKVSILNAINA.

Belongs to the UPF0457 family.

This chain is UPF0457 protein BALH_2270, found in Bacillus thuringiensis (strain Al Hakam).